The chain runs to 231 residues: Lipoprotein-releasing system ATP-binding protein LolD 2 (231 aa).

One can recognise an ABC transporter domain in the interval 6–230 (VEARSLSKSF…DGRLVGQDPA (225 aa)). 42–49 (GPSGSGKS) lines the ATP pocket.

This sequence belongs to the ABC transporter superfamily. Lipoprotein translocase (TC 3.A.1.125) family. In terms of assembly, the complex is composed of two ATP-binding proteins (LolD) and two transmembrane proteins (LolC and LolE).

The protein localises to the cell inner membrane. Functionally, part of the ABC transporter complex LolCDE involved in the translocation of mature outer membrane-directed lipoproteins, from the inner membrane to the periplasmic chaperone, LolA. Responsible for the formation of the LolA-lipoprotein complex in an ATP-dependent manner. This chain is Lipoprotein-releasing system ATP-binding protein LolD 2, found in Rhodospirillum rubrum (strain ATCC 11170 / ATH 1.1.1 / DSM 467 / LMG 4362 / NCIMB 8255 / S1).